The following is a 370-amino-acid chain: MATLSLHSHSFLLVLLPFILILRQNLAVAGGCQVPPVIFNFGDSNSDTGGLVAGLGYSIGLPNGRSFFQRSTGRLSDGRLVIDFLCQSLNTSLLNPYLDSLVGSKFQNGANFAIVGSSTLPRYVPFALNIQLMQFLHFKSRALELASISDPLKEMMIGESGFRNALYMIDIGQNDIADSFSKGLSYSRVVKLIPNVISEIKSAIKILYDEGGRKFWVHNTGPLGCLPQKLSMVHSKGFDKHGCLATYNAAAKLFNEGLDHMCRDLRTELKEANIVYVDIYAIKYDLIANSNNYGFEKPLMACCGYGGPPYNYNVNITCGNGGSKSCDEGSRFISWDGIHYTETANAIVAMKVLSMQHSTPPTPFHFFCGG.

The signal sequence occupies residues 1 to 27 (MATLSLHSHSFLLVLLPFILILRQNLA). The active-site Nucleophile is the Ser-44. N-linked (GlcNAc...) asparagine glycans are attached at residues Asn-90 and Asn-315. Residues Asp-336 and His-339 contribute to the active site.

The protein belongs to the 'GDSL' lipolytic enzyme family.

It localises to the secreted. The polypeptide is GDSL esterase/lipase At1g09390 (Arabidopsis thaliana (Mouse-ear cress)).